We begin with the raw amino-acid sequence, 346 residues long: Hydroxycarboxylic acid receptor 1 (346 aa).

At 1 to 21 (MYNGSCCRIEGDTISQVMPPL) the chain is on the extracellular side. A glycan (N-linked (GlcNAc...) asparagine) is linked at asparagine 3. The helical transmembrane segment at 22-42 (LIVAFVLGALGNGVALCGFCF) threads the bilayer. The Cytoplasmic segment spans residues 43–49 (HMKTWKP). The chain crosses the membrane as a helical span at residues 50-70 (STVYLFNLAVADFLLMICLPF). Topologically, residues 71–89 (RTDYYLRRRHWAFGDIPCR) are extracellular. A disulfide bond links cysteine 88 and cysteine 165. A helical membrane pass occupies residues 90–110 (VGLFTLAMNRAGSIVFLTVVA). Residues 111–130 (ADRYFKVVHPHHAVNTISTR) are Cytoplasmic-facing. A helical membrane pass occupies residues 131–151 (VAAGIVCTLWALVILGTVYLL). Residues 152-182 (LENHLCVQETAVSCESFIMESANGWHDIMFQ) are Extracellular-facing. Residues 183-203 (LEFFMPLGIILFCSFKIVWSL) traverse the membrane as a helical segment. Residues 204–220 (RRRQQLARQARMKKATR) lie on the Cytoplasmic side of the membrane. A helical membrane pass occupies residues 221–241 (FIMVVAIVFITCYLPSVSARL). Topologically, residues 242-261 (YFLWTVPSSACDPSVHGALH) are extracellular. The chain crosses the membrane as a helical span at residues 262–281 (ITLSFTYMNSMLDPLVYYFS). At 282–346 (SPSFPKFYNK…QWDPHIVEWH (65 aa)) the chain is on the cytoplasmic side.

This sequence belongs to the G-protein coupled receptor 1 family. In terms of tissue distribution, expressed abundantly in brown and white fat. It also detectable at lower levels in liver, kidney, skeletal muscle, brain and pituitary. Not detected in frontal, temporal and occipital lobes of the cortex, basal forebrain, caudate nucleus, nucleus accumbens and hippocampus.

The protein resides in the cell membrane. Acts as a receptor for L-lactate and mediates its anti-lipolytic effect through a G(i)-protein-mediated pathway. This is Hydroxycarboxylic acid receptor 1 (HCAR1) from Homo sapiens (Human).